We begin with the raw amino-acid sequence, 128 residues long: Iron-sulfur cluster insertion protein ErpA (128 aa).

Iron-sulfur cluster is bound by residues cysteine 56, cysteine 120, and cysteine 122.

Belongs to the HesB/IscA family. In terms of assembly, homodimer. Iron-sulfur cluster serves as cofactor.

Functionally, required for insertion of 4Fe-4S clusters for at least IspG. The sequence is that of Iron-sulfur cluster insertion protein ErpA from Xanthomonas axonopodis pv. citri (strain 306).